The primary structure comprises 196 residues: dTTP/UTP pyrophosphatase (196 aa).

Residue D73 is the Proton acceptor of the active site.

It belongs to the Maf family. YhdE subfamily. A divalent metal cation serves as cofactor.

The protein localises to the cytoplasm. The enzyme catalyses dTTP + H2O = dTMP + diphosphate + H(+). It catalyses the reaction UTP + H2O = UMP + diphosphate + H(+). Its function is as follows. Nucleoside triphosphate pyrophosphatase that hydrolyzes dTTP and UTP. May have a dual role in cell division arrest and in preventing the incorporation of modified nucleotides into cellular nucleic acids. The protein is dTTP/UTP pyrophosphatase of Myxococcus xanthus (strain DK1622).